A 617-amino-acid polypeptide reads, in one-letter code: Proline--tRNA ligase (617 aa).

It belongs to the class-II aminoacyl-tRNA synthetase family. ProS type 1 subfamily. In terms of assembly, homodimer.

The protein resides in the cytoplasm. The catalysed reaction is tRNA(Pro) + L-proline + ATP = L-prolyl-tRNA(Pro) + AMP + diphosphate. Its function is as follows. Catalyzes the attachment of proline to tRNA(Pro) in a two-step reaction: proline is first activated by ATP to form Pro-AMP and then transferred to the acceptor end of tRNA(Pro). As ProRS can inadvertently accommodate and process non-cognate amino acids such as alanine and cysteine, to avoid such errors it has two additional distinct editing activities against alanine. One activity is designated as 'pretransfer' editing and involves the tRNA(Pro)-independent hydrolysis of activated Ala-AMP. The other activity is designated 'posttransfer' editing and involves deacylation of mischarged Ala-tRNA(Pro). The misacylated Cys-tRNA(Pro) is not edited by ProRS. The protein is Proline--tRNA ligase of Streptococcus pneumoniae (strain ATCC 700669 / Spain 23F-1).